Here is a 402-residue protein sequence, read N- to C-terminus: Candidapepsin-1 (402 aa).

The or 18, or 21 signal peptide spans 1–25; the sequence is MVAIVTLTRQVLLTIALALFAQGAA. The propeptide at 26-62 is activation peptide; it reads IPEEAAKRDDNPGFVALDFDVLRKPLNLTEALLREKR. Asparagine 52 carries an N-linked (GlcNAc...) asparagine glycan. The Peptidase A1 domain occupies 76–389; the sequence is YASKVSVGSN…NLDANTISIA (314 aa). Aspartate 94 is an active-site residue. An intrachain disulfide couples cysteine 109 to cysteine 115. Aspartate 282 is an active-site residue. A disulfide bridge links cysteine 320 with cysteine 354.

Belongs to the peptidase A1 family. Post-translationally, O-glycosylated.

It is found in the secreted. It catalyses the reaction Preferential cleavage at the carboxyl of hydrophobic amino acids, but fails to cleave 15-Leu-|-Tyr-16, 16-Tyr-|-Leu-17 and 24-Phe-|-Phe-25 of insulin B chain. Activates trypsinogen, and degrades keratin.. In Candida parapsilosis (Yeast), this protein is Candidapepsin-1 (SAPP1).